The chain runs to 365 residues: MESSLPQVAALDRSTLLKAFDETKTGVKGLIDAGITEIPSIFRAPPATLTSPKPPSSSDFSIPTIDLKGGGTDSITRRSLVEKIGDAAEKWGFFQVINHGIPMDVLEKMIDGIREFHEQDTEVKKGFYSRDPASKMVYSSNFDLFSSPAANWRDTLGCYTAPDPPRPEDLPATCGEMMIEYSKEVMKLGKLLFELLSEALGLNTNHLKDMDCTNSLLLLGHYYPPCPQPDLTLGLTKHSDNSFLTILLQDHIGGLQVLHDQYWVDVPPVPGALVVNVGDLLQLITNDKFISVEHRVLANVAGPRISVACFFSSYLMANPRVYGPIKEILSEENPPNYRDTTITEYAKFYRSKGFDGTSGLLYLKI.

The region spanning 212–313 is the Fe2OG dioxygenase domain; that stretch reads CTNSLLLLGH…RISVACFFSS (102 aa). His-238, Asp-240, and His-294 together coordinate Fe cation.

It belongs to the iron/ascorbate-dependent oxidoreductase family. Fe cation serves as cofactor.

The protein is 1-aminocyclopropane-1-carboxylate oxidase homolog 1 of Arabidopsis thaliana (Mouse-ear cress).